The sequence spans 543 residues: Serine/threonine-protein kinase PkaA (543 aa).

A Protein kinase domain is found at 8–276; it reads YLLEEPLGRG…ENLARGLRVV (269 aa). ATP-binding positions include 14-22 and Lys-48; that span reads LGRGATGTV. Asp-142 acts as the Proton acceptor in catalysis. Positions 303–480 are disordered; it reads PAPAQVPGAP…RQRSANPMRI (178 aa). Pro residues predominate over residues 352 to 361; that stretch reads VMPPVPPGQP. Composition is skewed to low complexity over residues 407-420 and 428-451; these read RQVS…RQAP and PGYG…QPQR. Residues 452–461 show a composition bias toward pro residues; the sequence is YAPPPAPEPQ.

This sequence belongs to the protein kinase superfamily. Ser/Thr protein kinase family. In terms of processing, autophosphorylated mainly at Thr and slightly at Ser.

It catalyses the reaction L-seryl-[protein] + ATP = O-phospho-L-seryl-[protein] + ADP + H(+). It carries out the reaction L-threonyl-[protein] + ATP = O-phospho-L-threonyl-[protein] + ADP + H(+). The polypeptide is Serine/threonine-protein kinase PkaA (pkaA) (Streptomyces coelicolor (strain ATCC BAA-471 / A3(2) / M145)).